A 446-amino-acid polypeptide reads, in one-letter code: MNSVVSFDSSKLTPFVHENELKEMQAMVNAADKELREGTGAGNDFRGWLDLPVDYDKDEFARIKKAAKKIQSDSDVLIGIGIGGSYLGAQAAIEFLNSSFYMAEKSDYPKVVFCGNSLSGTYLSDLINWLGDKDFSLNIISKSGTTTEPSVAFRVLKAKLIEKYGKEEAAKRIYATTDRQKGALKIEADAEGYEEFVVPDDVGGRFSVLSAVGLLPIAAAGCDIDALMQGAADARAAYTDPDVSKDSPYQYAALRNILYRKGYTTELLENYEPSIRMFGEWWKQLMGESEGKDQKGIYPSSANFTTDLHSLGQYIQEGRRNLMETVVRVAGPRADVEIPNDESNLDQLNFLAGKKMNYVNDRAYEGVVLAHTDGGVPVMTVNIADQSEHTLGYLIYWFELSVAISGYLNGINPFNQPGVEAYKRNMFGLLNKPGYEDLHDELASRL.

The active-site Proton donor is E288. Catalysis depends on residues H309 and K423.

Belongs to the GPI family.

Its subcellular location is the cytoplasm. The catalysed reaction is alpha-D-glucose 6-phosphate = beta-D-fructose 6-phosphate. It functions in the pathway carbohydrate biosynthesis; gluconeogenesis. It participates in carbohydrate degradation; glycolysis; D-glyceraldehyde 3-phosphate and glycerone phosphate from D-glucose: step 2/4. Its function is as follows. Catalyzes the reversible isomerization of glucose-6-phosphate to fructose-6-phosphate. The sequence is that of Glucose-6-phosphate isomerase from Lactobacillus delbrueckii subsp. bulgaricus (strain ATCC 11842 / DSM 20081 / BCRC 10696 / JCM 1002 / NBRC 13953 / NCIMB 11778 / NCTC 12712 / WDCM 00102 / Lb 14).